The sequence spans 383 residues: Delta(12) acyl-lipid conjugase (11E,13E-forming) (383 aa).

Residues 1 to 30 are disordered; it reads MGEVGPTNRTKTKLDKQQESENRVPHEPPP. The span at 12 to 26 shows a compositional bias: basic and acidic residues; it reads TKLDKQQESENRVPH. The next 2 membrane-spanning stretches (helical) occupy residues 56 to 76 and 84 to 104; these read VIHDIIILSFFYYVAANYIPM and VAWPIYWAIQGCVQLGILVLG. The short motif at 105–109 is the Histidine box-1 element; that stretch reads HECGH. The Histidine box-2 motif lies at 141–145; it reads HRRHH. The next 3 helical transmembrane spans lie at 179-199, 225-245, and 249-269; these read FLMIFGALLFGWPSYLLFNAN, VIASDVGLVFAYFVLYKIALA, and VWLICVYGVPYVILNGLIVLI. A Histidine box-3 motif is present at residues 315-319; sequence HLVHH.

It belongs to the fatty acid desaturase type 1 family. As to expression, expressed in developing seeds, but not in leaves.

Its subcellular location is the membrane. It carries out the reaction a (9Z,12Z)-octadecadienoyl-containing glycerolipid + 2 Fe(II)-[cytochrome b5] + O2 + 2 H(+) = a (9Z,11E,13E)-octadecatrienoyl-containing glycerolipid + 2 Fe(III)-[cytochrome b5] + 2 H2O. The enzyme catalyses (9Z,12Z,15Z)-octadecatrienoyl-containing glycerolipid + 2 Fe(II)-[cytochrome b5] + O2 + 2 H(+) = a (9Z,11E,13E,15Z)-octadecatetraenoyl-containing glycerolipid + 2 Fe(III)-[cytochrome b5] + 2 H2O. The protein operates within lipid metabolism; polyunsaturated fatty acid biosynthesis. Its function is as follows. Converts linoleic acid to alpha-eleostearic acid (18:3(9Z,11E,13E)) and alpha-linolenic acid to alpha-parinaric acid (18:4(9Z,11E, 13E, 15Z)). Converts a single cis double bond at carbon 12 to two conjugated trans bonds at positions 11 and 13. The sequence is that of Delta(12) acyl-lipid conjugase (11E,13E-forming) from Impatiens balsamina (Balsam).